A 267-amino-acid polypeptide reads, in one-letter code: Apolipoprotein A-I (267 aa).

Positions 1-18 are cleaved as a signal peptide; it reads MKAAVLTLAVLFLTGSQA. 2 consecutive repeat copies span residues 68–89 and 90–111. Residues 68 to 267 form a 10 X approximate tandem repeats region; the sequence is LKLLDNWDSV…EEYTKKLNTQ (200 aa). The residue at position 110 (M110) is a Methionine sulfoxide. One copy of the 3; half-length repeat lies at 112–122; that stretch reads KDLEEVKAKVQ. 5 tandem repeats follow at residues 123–144, 145–166, 167–188, 189–210, and 211–232. Methionine sulfoxide is present on M136. The 9; half-length repeat unit spans residues 233 to 243; it reads PALEDLRQGLL. Repeat unit 10 spans residues 244 to 267; sequence PVLESFKVSFLSALEEYTKKLNTQ.

It belongs to the apolipoprotein A1/A4/E family. Homodimer. Interacts with APOA1BP and CLU. Component of a sperm activating protein complex (SPAP), consisting of APOA1, an immunoglobulin heavy chain, an immunoglobulin light chain and albumin. Interacts with NDRG1. Interacts with SCGB3A2. Interacts with NAXE and YJEFN3. Post-translationally, glycosylated. Palmitoylated. In terms of processing, phosphorylation sites are present in the extracellular medium. As to expression, major protein of plasma HDL, also found in chylomicrons.

It is found in the secreted. In terms of biological role, participates in the reverse transport of cholesterol from tissues to the liver for excretion by promoting cholesterol efflux from tissues and by acting as a cofactor for the lecithin cholesterol acyltransferase (LCAT). As part of the SPAP complex, activates spermatozoa motility. The sequence is that of Apolipoprotein A-I (APOA1) from Pan paniscus (Pygmy chimpanzee).